The sequence spans 490 residues: GTPase Der (490 aa).

EngA-type G domains are found at residues 3–166 (PVVA…AEAM) and 200–373 (IKLA…DSAT). Residues 9–16 (GRPNVGKS), 56–60 (DTGGI), 118–121 (NKVD), 206–213 (GKPNVGKS), 253–257 (DTAGV), and 318–321 (NKWD) contribute to the GTP site. A KH-like domain is found at 374–458 (RRVSTSMLTR…PIQIRFQDGG (85 aa)).

This sequence belongs to the TRAFAC class TrmE-Era-EngA-EngB-Septin-like GTPase superfamily. EngA (Der) GTPase family. In terms of assembly, associates with the 50S ribosomal subunit.

Functionally, GTPase that plays an essential role in the late steps of ribosome biogenesis. This is GTPase Der from Shewanella piezotolerans (strain WP3 / JCM 13877).